The chain runs to 172 residues: GTP-dependent dephospho-CoA kinase (172 aa).

Residues Asp-49, Val-50, Val-51, Asp-68, Lys-70, and Glu-120 each coordinate GTP.

It belongs to the GTP-dependent DPCK family.

The enzyme catalyses 3'-dephospho-CoA + GTP = GDP + CoA + H(+). It functions in the pathway cofactor biosynthesis; coenzyme A biosynthesis. Functionally, catalyzes the GTP-dependent phosphorylation of the 3'-hydroxyl group of dephosphocoenzyme A to form coenzyme A (CoA). The sequence is that of GTP-dependent dephospho-CoA kinase from Pyrobaculum arsenaticum (strain DSM 13514 / JCM 11321 / PZ6).